We begin with the raw amino-acid sequence, 622 residues long: MSSIFGENIVSDSIVNMELTNPDNTTTMHPIYETNIEKEVQQEFSDNVSEKETIDSTKSKISLENIQQEMGALAKKIFHKLGVKATDLGFSNEHDDSQDSLQTLAPSPSYVPLLKVIGSSEEVNSNLVLTDLETNTDGYDPKFLISVRKFLMGSPNSGFVVKHEKRLPDGPRVLALRAISSVDEENRKERLSPDSDPVETESVYVDNGELSNQKVETVEISEKEQNDDPAGYSQYLLEFKKSKCQKKVPTLESIEENEGTEPHDNLTFMTDLGTPYYSLGNEFERKQILDEYGLLANDENLVIGHTLRAEYCFMFDESDILQLRNYEHTEKELSVLQFKGVSSRWDFRCCREERLLRLLLCFDSEHTGQSFIQLNDPENENEKEEQNSISIRELSYFSTKLISLILPKEAHKQRYIMLSSLAKTREADFFWSEEEKTNYTNELLSNPCKFLCELDHFDSFPHQQQDLLWKYLAEFSASLELDPNLALWKKQVIFSKIGHPKLLVMPISSFHCVQRFPDLVCVQTSTAETFLSVDRELTTYDLNTIKLLNTAPSRTAQNWLFIMHHLEIVGYLFPHLVHLDKQYSLLDYAKSVEHIPELGTVQRKGFLNKVAFDDNEALLYQV.

This is Meiotic expression up-regulated protein 25 (meu25) from Schizosaccharomyces pombe (strain 972 / ATCC 24843) (Fission yeast).